Reading from the N-terminus, the 830-residue chain is WD repeat-containing protein 75 (830 aa).

9 WD repeats span residues 4–43, 47–86, 90–131, 145–184, 193–231, 237–276, 279–318, 324–362, and 376–423; these read EENIRVVRCGGSELNFRRAVFSADSKYIFCVSGDFVKVYS, EECVHILHGHRNLVTGIQLNPNNHLQLYSCSLDGTIKLWD, GILI…QLVS, KELSFVLDYINQSPKCIAFGNEGVYVAAVREFYLSVYFFK, LSSSRNKKHAKNNFTCVACHPTEDCIASGHMDGKIRLWR, KKYTYTCLHWHHDMVMDLAFSVTGTSLLSGGRESVLVEWR, TEKNKEFLPRLGATIEHISVSPAGDLFCTSHSDNKIIIIH, SAVIQGLVKDRSIFTGLMIDPRTKALVLNGKPGHLQFYS, and QQEY…KLWM. Residue Lys123 forms a Glycyl lysine isopeptide (Lys-Gly) (interchain with G-Cter in SUMO2) linkage. A Glycyl lysine isopeptide (Lys-Gly) (interchain with G-Cter in SUMO2) cross-link involves residue Lys427. 4 WD repeats span residues 430-474, 487-525, 529-569, and 574-611; these read GFIL…KVWI, GWTCDFVGSYHKYQATNCCFSEDGSLLAVSFEEIVTIWD, WELK…CCWN, and ALEWNAKLNVRVMEPDPNSENIAAISQSSVGSDLFVFK. Lys466 is modified (N6-acetyllysine). Phosphoserine is present on residues Ser664 and Ser672. Residue Lys676 forms a Glycyl lysine isopeptide (Lys-Gly) (interchain with G-Cter in SUMO2) linkage. A disordered region spans residues 763-806; that stretch reads SAKEIPEDVDMEEEKESEDSDEENDFTEKVQDTSNTGLGEDIIH. The span at 769 to 787 shows a compositional bias: acidic residues; the sequence is EDVDMEEEKESEDSDEEND. 4 positions are modified to phosphoserine: Ser779, Ser782, Ser796, and Ser811.

Component of the proposed t-UTP subcomplex of the ribosomal small subunit (SSU) processome. SSU processome is composed of more than 70 proteins and the RNA chaperone small nucleolar RNA (snoRNA) U3.

The protein resides in the nucleus. It localises to the nucleolus. Ribosome biogenesis factor. Part of the small subunit (SSU) processome, first precursor of the small eukaryotic ribosomal subunit. During the assembly of the SSU processome in the nucleolus, many ribosome biogenesis factors, an RNA chaperone and ribosomal proteins associate with the nascent pre-rRNA and work in concert to generate RNA folding, modifications, rearrangements and cleavage as well as targeted degradation of pre-ribosomal RNA by the RNA exosome. Involved in nucleolar processing of pre-18S ribosomal RNA. Required for optimal pre-ribosomal RNA transcription by RNA polymerase I. This chain is WD repeat-containing protein 75, found in Homo sapiens (Human).